The chain runs to 255 residues: EEF1A lysine methyltransferase 4 (255 aa).

W26 and Y30 together coordinate S-adenosyl-L-methionine. Y39 bears the Phosphotyrosine mark. S-adenosyl-L-methionine contacts are provided by residues W41, G66, D88–Y89, D113–V114, and K130. The Required for methyltransferase activity signature appears at E129–D134.

This sequence belongs to the methyltransferase superfamily.

It carries out the reaction L-lysyl-[protein] + S-adenosyl-L-methionine = N(6)-methyl-L-lysyl-[protein] + S-adenosyl-L-homocysteine + H(+). It catalyses the reaction N(6)-methyl-L-lysyl-[protein] + S-adenosyl-L-methionine = N(6),N(6)-dimethyl-L-lysyl-[protein] + S-adenosyl-L-homocysteine + H(+). The catalysed reaction is N(6),N(6)-dimethyl-L-lysyl-[protein] + S-adenosyl-L-methionine = N(6),N(6),N(6)-trimethyl-L-lysyl-[protein] + S-adenosyl-L-homocysteine + H(+). In terms of biological role, protein-lysine methyltransferase that efficiently catalyzes three successive methylations on 'Lys-36' in eukaryotic translation elongation factor 1 alpha (EEF1A1 or EEF1A2). This is EEF1A lysine methyltransferase 4 from Homo sapiens (Human).